Consider the following 147-residue polypeptide: NAD(P)H-quinone oxidoreductase subunit N (147 aa).

It belongs to the complex I NdhN subunit family. As to quaternary structure, NDH-1 can be composed of about 15 different subunits; different subcomplexes with different compositions have been identified which probably have different functions.

The protein resides in the cellular thylakoid membrane. It catalyses the reaction a plastoquinone + NADH + (n+1) H(+)(in) = a plastoquinol + NAD(+) + n H(+)(out). The catalysed reaction is a plastoquinone + NADPH + (n+1) H(+)(in) = a plastoquinol + NADP(+) + n H(+)(out). In terms of biological role, NDH-1 shuttles electrons from an unknown electron donor, via FMN and iron-sulfur (Fe-S) centers, to quinones in the respiratory and/or the photosynthetic chain. The immediate electron acceptor for the enzyme in this species is believed to be plastoquinone. Couples the redox reaction to proton translocation, and thus conserves the redox energy in a proton gradient. Cyanobacterial NDH-1 also plays a role in inorganic carbon-concentration. This is NAD(P)H-quinone oxidoreductase subunit N from Synechococcus sp. (strain JA-2-3B'a(2-13)) (Cyanobacteria bacterium Yellowstone B-Prime).